We begin with the raw amino-acid sequence, 64 residues long: Large ribosomal subunit protein uL30 (64 aa).

This sequence belongs to the universal ribosomal protein uL30 family. As to quaternary structure, part of the 50S ribosomal subunit.

The protein is Large ribosomal subunit protein uL30 of Bradyrhizobium diazoefficiens (strain JCM 10833 / BCRC 13528 / IAM 13628 / NBRC 14792 / USDA 110).